We begin with the raw amino-acid sequence, 347 residues long: NADH-quinone oxidoreductase subunit H 1 (347 aa).

Helical transmembrane passes span 14–34 (IMIGQSLLLLVALLLFIAYVL), 50–70 (PNVVGPFGLFQSFADLLKFVF), 83–103 (IFLLAPLVSVTLALAAWAVIP), 115–135 (VGILFVFAISSLEVYGIIMGG), 161–181 (IGFVIVTVLLCVGSLNLTDIV), 198–218 (FLDWHWLSLFPMFIIFFISAL), 258–278 (AICLMCALTTILFLGGWLPPV), 286–306 (VPGIIWFVLKASLVFFMFAMV), and 321–341 (LGWKVFLPLSLAMVVIVAFVL).

It belongs to the complex I subunit 1 family. As to quaternary structure, NDH-1 is composed of 14 different subunits. Subunits NuoA, H, J, K, L, M, N constitute the membrane sector of the complex.

Its subcellular location is the cell inner membrane. The catalysed reaction is a quinone + NADH + 5 H(+)(in) = a quinol + NAD(+) + 4 H(+)(out). In terms of biological role, NDH-1 shuttles electrons from NADH, via FMN and iron-sulfur (Fe-S) centers, to quinones in the respiratory chain. The immediate electron acceptor for the enzyme in this species is believed to be ubiquinone. Couples the redox reaction to proton translocation (for every two electrons transferred, four hydrogen ions are translocated across the cytoplasmic membrane), and thus conserves the redox energy in a proton gradient. This subunit may bind ubiquinone. In Rhizobium meliloti (strain 1021) (Ensifer meliloti), this protein is NADH-quinone oxidoreductase subunit H 1.